The sequence spans 293 residues: Small ribosomal subunit protein uS2 (293 aa).

Residues 265–293 (DGGDWAASSAPAPGGENWAEAQPAEGAKW) form a disordered region.

This sequence belongs to the universal ribosomal protein uS2 family. Component of the small ribosomal subunit. Mature ribosomes consist of a small (40S) and a large (60S) subunit. The 40S subunit contains about 33 different proteins and 1 molecule of RNA (18S). The 60S subunit contains about 49 different proteins and 3 molecules of RNA (25S, 5.8S and 5S). Interacts with rps21.

It localises to the cytoplasm. In terms of biological role, required for the assembly and/or stability of the 40S ribosomal subunit. Required for the processing of the 20S rRNA-precursor to mature 18S rRNA in a late step of the maturation of 40S ribosomal subunits. The polypeptide is Small ribosomal subunit protein uS2 (rps0) (Emericella nidulans (strain FGSC A4 / ATCC 38163 / CBS 112.46 / NRRL 194 / M139) (Aspergillus nidulans)).